A 1085-amino-acid chain; its full sequence is Solute carrier family 12 member 4 (1085 aa).

Residues 1–119 (MPHFTVVPVD…RRAAKAPSMG (119 aa)) are Cytoplasmic-facing. Phosphoserine is present on residues Ser-24, Ser-47, Ser-81, and Ser-88. Residues 120–141 (TLMGVYLPCLQNIFGVILFLRL) traverse the membrane as a discontinuously helical segment. K(+) is bound by residues Asn-131 and Ile-132. Over 142–149 (TWMVGTAG) the chain is Extracellular. A helical membrane pass occupies residues 150-172 (VLQALLIVLICCCCTLLTAISMS). At 173-196 (AIATNGVVPAGGSYFMISRSLGPE) the chain is on the cytoplasmic side. The helical transmembrane segment at 197 to 225 (FGGAVGLCFYLGTTFAAAMYILGAIEILL) threads the bilayer. Tyr-216 lines the K(+) pocket. Topologically, residues 226–248 (TYIAPPAAIFYPSGTHDMSSATL) are extracellular. 2 consecutive transmembrane segments (helical) span residues 249–271 (NNMR…VGVK) and 272–297 (YVNK…GGIK). Over 298–419 (SIFDPPVFPV…LYVVADIATS (122 aa)) the chain is Extracellular. Cys-308 and Cys-323 form a disulfide bridge. 3 N-linked (GlcNAc...) asparagine glycosylation sites follow: Asn-312, Asn-331, and Asn-347. A disulfide bridge links Cys-343 with Cys-353. The chain crosses the membrane as a helical span at residues 420–440 (FTVLVGIFFPSVTGIMAGSNR). Residues Pro-429 and Thr-432 each coordinate K(+). 3 residues coordinate chloride: Gly-433, Ile-434, and Met-435. At 441–450 (SGDLRDAQKS) the chain is on the cytoplasmic side. The chain crosses the membrane as a helical span at residues 451–473 (IPVGTILAIVTTSLVYFSSVILF). Residues 474–504 (GACIEGVVLRDKYGDGVSRNLVVGTLAWPSP) are Extracellular-facing. A helical transmembrane segment spans residues 505–531 (WVIVVGSFFSTCGAGLQSLTGAPRLLQ). Topologically, residues 532–554 (AIAKDNIIPFLRVFGHGKANGEP) are cytoplasmic. Transmembrane regions (helical) follow at residues 555–575 (TWAL…ASLD) and 576–598 (MVAP…ACAV). Tyr-589 lines the chloride pocket. Residues 599-612 (QTLLRTPNWRPRFK) are Cytoplasmic-facing. Helical transmembrane passes span 613-635 (YYHW…VSSW) and 636-651 (YYAL…IYKY). Over 652–1085 (IEYQGAEKEW…GGREVITIYS (434 aa)) the chain is Cytoplasmic. The tract at residues 665–681 (IRGLSLSAARYALLRLE) is scissor helix. The ATP site is built by Leu-697, Lys-699, Lys-707, Tyr-708, and Val-730. Phosphoserine is present on Ser-734. Residues Gly-794, Trp-795, and Tyr-797 each coordinate ATP. Residues Ser-916 and Ser-967 each carry the phosphoserine modification. Thr-983 is subject to Phosphothreonine. The residue at position 1050 (Ser-1050) is a Phosphoserine.

It belongs to the SLC12A transporter family. K/Cl co-transporter subfamily. In terms of assembly, homodimer; adopts a domain-swap conformation at the scissor helices connecting the transmembrane domain and C-terminal domain. Heterodimer with other K-Cl cotransporters. In terms of processing, phosphorylated, phosphorylation may regulate transporter activity. Detected in embryo, adult heart, erythrocytes, brain, kidney, stomach, ovary, testis and liver.

The protein resides in the cell membrane. It carries out the reaction K(+)(in) + chloride(in) = K(+)(out) + chloride(out). Its activity is regulated as follows. Inhibited by WNK3. Functionally, mediates electroneutral potassium-chloride cotransport when activated by cell swelling. May contribute to cell volume homeostasis in single cells. May be involved in the regulation of basolateral Cl(-) exit in NaCl absorbing epithelia. The chain is Solute carrier family 12 member 4 (Slc12a4) from Mus musculus (Mouse).